The following is a 323-amino-acid chain: GTP 3',8-cyclase (323 aa).

In terms of domain architecture, Radical SAM core spans 4 to 233 (KYGREIDYLR…NGPAKYISIE (230 aa)). Residue R13 participates in GTP binding. Positions 20 and 24 each coordinate [4Fe-4S] cluster. Y26 is a binding site for S-adenosyl-L-methionine. Residue C27 participates in [4Fe-4S] cluster binding. Residue R63 coordinates GTP. G67 contacts S-adenosyl-L-methionine. T94 is a binding site for GTP. Position 118 (S118) interacts with S-adenosyl-L-methionine. K154 is a GTP binding site. M188 contributes to the S-adenosyl-L-methionine binding site. Residues C250 and C253 each contribute to the [4Fe-4S] cluster site. 255–257 (RIR) contributes to the GTP binding site. C267 is a binding site for [4Fe-4S] cluster.

Belongs to the radical SAM superfamily. MoaA family. In terms of assembly, monomer and homodimer. It depends on [4Fe-4S] cluster as a cofactor.

The enzyme catalyses GTP + AH2 + S-adenosyl-L-methionine = (8S)-3',8-cyclo-7,8-dihydroguanosine 5'-triphosphate + 5'-deoxyadenosine + L-methionine + A + H(+). It participates in cofactor biosynthesis; molybdopterin biosynthesis. Functionally, catalyzes the cyclization of GTP to (8S)-3',8-cyclo-7,8-dihydroguanosine 5'-triphosphate. This is GTP 3',8-cyclase from Clostridium perfringens (strain 13 / Type A).